A 303-amino-acid polypeptide reads, in one-letter code: Ribosomal RNA small subunit methyltransferase A (303 aa).

Positions 37, 39, 64, 85, 115, and 138 each coordinate S-adenosyl-L-methionine.

Belongs to the class I-like SAM-binding methyltransferase superfamily. rRNA adenine N(6)-methyltransferase family. RsmA subfamily.

The protein resides in the cytoplasm. It catalyses the reaction adenosine(1518)/adenosine(1519) in 16S rRNA + 4 S-adenosyl-L-methionine = N(6)-dimethyladenosine(1518)/N(6)-dimethyladenosine(1519) in 16S rRNA + 4 S-adenosyl-L-homocysteine + 4 H(+). Functionally, specifically dimethylates two adjacent adenosines (A1518 and A1519) in the loop of a conserved hairpin near the 3'-end of 16S rRNA in the 30S particle. May play a critical role in biogenesis of 30S subunits. This chain is Ribosomal RNA small subunit methyltransferase A, found in Bifidobacterium adolescentis (strain ATCC 15703 / DSM 20083 / NCTC 11814 / E194a).